The sequence spans 196 residues: 3-isopropylmalate dehydratase small subunit (196 aa).

This sequence belongs to the LeuD family. LeuD type 1 subfamily. In terms of assembly, heterodimer of LeuC and LeuD.

The enzyme catalyses (2R,3S)-3-isopropylmalate = (2S)-2-isopropylmalate. It participates in amino-acid biosynthesis; L-leucine biosynthesis; L-leucine from 3-methyl-2-oxobutanoate: step 2/4. Catalyzes the isomerization between 2-isopropylmalate and 3-isopropylmalate, via the formation of 2-isopropylmaleate. The sequence is that of 3-isopropylmalate dehydratase small subunit from Streptococcus thermophilus (strain CNRZ 1066).